The sequence spans 745 residues: Catalase-peroxidase (745 aa).

The tryptophyl-tyrosyl-methioninium (Trp-Tyr) (with M-249) cross-link spans 97–223; that stretch reads WHSAGTYRTG…LAAVQMGLIY (127 aa). His98 (proton acceptor) is an active-site residue. The segment at residues 223–249 is a cross-link (tryptophyl-tyrosyl-methioninium (Tyr-Met) (with W-97)); the sequence is YVNPEGPDGSPDPWASARDIRMTFARM. His264 serves as a coordination point for heme b. The interval 345 to 368 is disordered; it reads KQWQPVNPKPEDLAPGAHSPDRRV.

The protein belongs to the peroxidase family. Peroxidase/catalase subfamily. Homodimer or homotetramer. Heme b serves as cofactor. Post-translationally, formation of the three residue Trp-Tyr-Met cross-link is important for the catalase, but not the peroxidase activity of the enzyme.

It carries out the reaction H2O2 + AH2 = A + 2 H2O. It catalyses the reaction 2 H2O2 = O2 + 2 H2O. Bifunctional enzyme with both catalase and broad-spectrum peroxidase activity. The protein is Catalase-peroxidase of Phenylobacterium zucineum (strain HLK1).